A 606-amino-acid chain; its full sequence is Aspartate--tRNA(Asp/Asn) ligase (606 aa).

Glutamate 177 provides a ligand contact to L-aspartate. The segment at 201-204 (QIFK) is aspartate. Arginine 223 is an L-aspartate binding site. ATP-binding positions include 223–225 (RDE) and glutamine 232. Histidine 461 contacts L-aspartate. Glutamate 499 is an ATP binding site. Arginine 506 provides a ligand contact to L-aspartate. 551–554 (GLDR) is an ATP binding site.

Belongs to the class-II aminoacyl-tRNA synthetase family. Type 1 subfamily. In terms of assembly, homodimer.

The protein resides in the cytoplasm. It catalyses the reaction tRNA(Asx) + L-aspartate + ATP = L-aspartyl-tRNA(Asx) + AMP + diphosphate. Functionally, aspartyl-tRNA synthetase with relaxed tRNA specificity since it is able to aspartylate not only its cognate tRNA(Asp) but also tRNA(Asn). Reaction proceeds in two steps: L-aspartate is first activated by ATP to form Asp-AMP and then transferred to the acceptor end of tRNA(Asp/Asn). This Prochlorococcus marinus (strain MIT 9211) protein is Aspartate--tRNA(Asp/Asn) ligase.